Consider the following 129-residue polypeptide: Small ribosomal subunit protein uS11 (129 aa).

Belongs to the universal ribosomal protein uS11 family. Part of the 30S ribosomal subunit. Interacts with proteins S7 and S18. Binds to IF-3.

Functionally, located on the platform of the 30S subunit, it bridges several disparate RNA helices of the 16S rRNA. Forms part of the Shine-Dalgarno cleft in the 70S ribosome. The chain is Small ribosomal subunit protein uS11 from Pectobacterium atrosepticum (strain SCRI 1043 / ATCC BAA-672) (Erwinia carotovora subsp. atroseptica).